We begin with the raw amino-acid sequence, 1107 residues long: uncharacterized protein (1107 aa).

Positions 180-204 (SGNGSSGGNNNNNNNSLNNSNNSIG) are enriched in low complexity. 2 disordered regions span residues 180–251 (SGNG…SGNN) and 501–530 (LMNI…DNQM). Residues 205 to 215 (SSGGNGGGGSN) show a composition bias toward gly residues. The segment covering 219–237 (PSMSPQFTSISKTNSPQII) has biased composition (polar residues). Low complexity-rich tracts occupy residues 238 to 251 (NTSS…SGNN) and 501 to 521 (LMNI…NNND). Coiled-coil stretches lie at residues 789–816 (KKDI…IYRE) and 940–1012 (NIDH…NMLK).

This is an uncharacterized protein from Dictyostelium discoideum (Social amoeba).